The chain runs to 148 residues: Large ribosomal subunit protein bL9 (148 aa).

The protein belongs to the bacterial ribosomal protein bL9 family.

Functionally, binds to the 23S rRNA. This is Large ribosomal subunit protein bL9 from Bacillus cereus (strain G9842).